Consider the following 453-residue polypeptide: Bifunctional protein GlmU (453 aa).

Positions M1–R227 are pyrophosphorylase. UDP-N-acetyl-alpha-D-glucosamine-binding positions include L9 to G12, K23, Q74, G79 to T80, Y101 to D103, G138, E152, N167, and N225. Position 103 (D103) interacts with Mg(2+). A Mg(2+)-binding site is contributed by N225. The segment at L228 to A248 is linker. The tract at residues G249–K453 is N-acetyltransferase. UDP-N-acetyl-alpha-D-glucosamine-binding residues include R331 and K349. Catalysis depends on H361, which acts as the Proton acceptor. UDP-N-acetyl-alpha-D-glucosamine-binding residues include Y364 and N375. Acetyl-CoA contacts are provided by residues A378, N384–Y385, S403, A421, and R438.

The protein in the N-terminal section; belongs to the N-acetylglucosamine-1-phosphate uridyltransferase family. In the C-terminal section; belongs to the transferase hexapeptide repeat family. As to quaternary structure, homotrimer. Mg(2+) is required as a cofactor.

The protein resides in the cytoplasm. The enzyme catalyses alpha-D-glucosamine 1-phosphate + acetyl-CoA = N-acetyl-alpha-D-glucosamine 1-phosphate + CoA + H(+). It carries out the reaction N-acetyl-alpha-D-glucosamine 1-phosphate + UTP + H(+) = UDP-N-acetyl-alpha-D-glucosamine + diphosphate. The protein operates within nucleotide-sugar biosynthesis; UDP-N-acetyl-alpha-D-glucosamine biosynthesis; N-acetyl-alpha-D-glucosamine 1-phosphate from alpha-D-glucosamine 6-phosphate (route II): step 2/2. It participates in nucleotide-sugar biosynthesis; UDP-N-acetyl-alpha-D-glucosamine biosynthesis; UDP-N-acetyl-alpha-D-glucosamine from N-acetyl-alpha-D-glucosamine 1-phosphate: step 1/1. It functions in the pathway bacterial outer membrane biogenesis; LPS lipid A biosynthesis. Functionally, catalyzes the last two sequential reactions in the de novo biosynthetic pathway for UDP-N-acetylglucosamine (UDP-GlcNAc). The C-terminal domain catalyzes the transfer of acetyl group from acetyl coenzyme A to glucosamine-1-phosphate (GlcN-1-P) to produce N-acetylglucosamine-1-phosphate (GlcNAc-1-P), which is converted into UDP-GlcNAc by the transfer of uridine 5-monophosphate (from uridine 5-triphosphate), a reaction catalyzed by the N-terminal domain. In Histophilus somni (strain 129Pt) (Haemophilus somnus), this protein is Bifunctional protein GlmU.